A 126-amino-acid polypeptide reads, in one-letter code: UPF0538 protein C2orf76 homolog (126 aa).

It belongs to the UPF0538 family.

The polypeptide is UPF0538 protein C2orf76 homolog (Bos taurus (Bovine)).